The sequence spans 443 residues: Threonine/serine transporter TdcC (443 aa).

A run of 11 helical transmembrane segments spans residues 22-42, 44-64, 97-117, 140-160, 163-183, 207-227, 259-279, 319-339, 366-386, 389-409, and 423-443; these read TTWT…FFPI, AGFG…PIAF, GVVI…IYGV, VVAL…KDLM, VMSY…LSLI, ILVT…FSPI, ASML…FTLS, ASII…LGTL, LSMV…PNIL, IEAM…MYAI, and DNLF…YKLF.

Belongs to the amino acid/polyamine transporter 2 family. SdaC/TdcC subfamily.

It is found in the cell inner membrane. The enzyme catalyses L-threonine(in) + H(+)(in) = L-threonine(out) + H(+)(out). It catalyses the reaction L-serine(in) + H(+)(in) = L-serine(out) + H(+)(out). Functionally, involved in the import of threonine and serine into the cell, with the concomitant import of a proton (symport system). The sequence is that of Threonine/serine transporter TdcC from Klebsiella pneumoniae (strain 342).